A 535-amino-acid chain; its full sequence is Beta-glucosidase 20 (535 aa).

The signal sequence occupies residues 1 to 24 (MGRFHKFPLLGLVLFLGLTGSLIA). Gln-56 and His-159 together coordinate a beta-D-glucoside. Asn-187 carries N-linked (GlcNAc...) asparagine glycosylation. An a beta-D-glucoside-binding site is contributed by 204–205 (NE). The active-site Proton donor is the Glu-205. A disulfide bond links Cys-224 and Cys-235. A beta-D-glucoside is bound by residues Tyr-351 and Glu-424. Catalysis depends on Glu-424, which acts as the Nucleophile. Residue Asn-468 is glycosylated (N-linked (GlcNAc...) asparagine). A beta-D-glucoside is bound by residues Trp-475, 482 to 483 (EW), and Phe-491. N-linked (GlcNAc...) asparagine glycosylation is present at Asn-501. A Prevents secretion from ER motif is present at residues 532 to 535 (HDEL).

This sequence belongs to the glycosyl hydrolase 1 family.

It localises to the endoplasmic reticulum lumen. The enzyme catalyses Hydrolysis of terminal, non-reducing beta-D-glucosyl residues with release of beta-D-glucose.. The sequence is that of Beta-glucosidase 20 from Arabidopsis thaliana (Mouse-ear cress).